We begin with the raw amino-acid sequence, 266 residues long: Thiazole synthase (266 aa).

Catalysis depends on Lys-106, which acts as the Schiff-base intermediate with DXP. 1-deoxy-D-xylulose 5-phosphate contacts are provided by residues Gly-167, 193–194, and 215–216; these read AG and NT.

Belongs to the ThiG family. In terms of assembly, homotetramer. Forms heterodimers with either ThiH or ThiS.

It is found in the plastid. The protein localises to the chloroplast. It catalyses the reaction [ThiS sulfur-carrier protein]-C-terminal-Gly-aminoethanethioate + 2-iminoacetate + 1-deoxy-D-xylulose 5-phosphate = [ThiS sulfur-carrier protein]-C-terminal Gly-Gly + 2-[(2R,5Z)-2-carboxy-4-methylthiazol-5(2H)-ylidene]ethyl phosphate + 2 H2O + H(+). The protein operates within cofactor biosynthesis; thiamine diphosphate biosynthesis. Catalyzes the rearrangement of 1-deoxy-D-xylulose 5-phosphate (DXP) to produce the thiazole phosphate moiety of thiamine. Sulfur is provided by the thiocarboxylate moiety of the carrier protein ThiS. In vitro, sulfur can be provided by H(2)S. This is Thiazole synthase from Cyanidium caldarium (Red alga).